The chain runs to 218 residues: Small ribosomal subunit protein uS3 (218 aa).

In terms of domain architecture, KH type-2 spans 38-106 (IREFINQRLS…RVHINILEIK (69 aa)).

It belongs to the universal ribosomal protein uS3 family. As to quaternary structure, part of the 30S ribosomal subunit. Forms a tight complex with proteins S10 and S14.

Its function is as follows. Binds the lower part of the 30S subunit head. Binds mRNA in the 70S ribosome, positioning it for translation. In Bacillus licheniformis (strain ATCC 14580 / DSM 13 / JCM 2505 / CCUG 7422 / NBRC 12200 / NCIMB 9375 / NCTC 10341 / NRRL NRS-1264 / Gibson 46), this protein is Small ribosomal subunit protein uS3.